The following is a 305-amino-acid chain: Tyrosine recombinase XerD (305 aa).

One can recognise a Core-binding (CB) domain in the interval 3–88 (PADASVIERF…TLRAFYGLCL (86 aa)). The Tyr recombinase domain maps to 109–299 (SLPKALTESQ…ARQHLQKLHA (191 aa)). Active-site residues include arginine 149, lysine 173, histidine 251, arginine 254, and histidine 277. Tyrosine 286 serves as the catalytic O-(3'-phospho-DNA)-tyrosine intermediate.

The protein belongs to the 'phage' integrase family. XerD subfamily. Forms a cyclic heterotetrameric complex composed of two molecules of XerC and two molecules of XerD.

It is found in the cytoplasm. Functionally, site-specific tyrosine recombinase, which acts by catalyzing the cutting and rejoining of the recombining DNA molecules. The XerC-XerD complex is essential to convert dimers of the bacterial chromosome into monomers to permit their segregation at cell division. It also contributes to the segregational stability of plasmids. In Xanthomonas axonopodis pv. citri (strain 306), this protein is Tyrosine recombinase XerD.